Consider the following 185-residue polypeptide: Ribosome-recycling factor (185 aa).

Belongs to the RRF family.

The protein resides in the cytoplasm. Responsible for the release of ribosomes from messenger RNA at the termination of protein biosynthesis. May increase the efficiency of translation by recycling ribosomes from one round of translation to another. This is Ribosome-recycling factor from Nocardia farcinica (strain IFM 10152).